Reading from the N-terminus, the 560-residue chain is Putative transport protein ESA_02488 (560 aa).

Helical transmembrane passes span 8–28 (LLNG…LCLG), 32–52 (LGSV…LLGQ), 66–86 (FMLF…SIFF), 91–111 (NYLM…LGLG), and 158–178 (HLSL…IFGA). RCK C-terminal domains are found at residues 200 to 288 (RGLD…SFRN) and 292 to 373 (VFDR…RIGF). 5 consecutive transmembrane segments (helical) span residues 383–403 (LLAF…TFQF), 406–426 (FSFG…LGFL), 447–467 (FGLM…IGHG), 475–495 (MLFA…LFGA), and 539–559 (YAIA…IWPG).

It belongs to the AAE transporter (TC 2.A.81) family. YbjL subfamily.

It is found in the cell membrane. The chain is Putative transport protein ESA_02488 from Cronobacter sakazakii (strain ATCC BAA-894) (Enterobacter sakazakii).